A 488-amino-acid chain; its full sequence is Inosine-5'-monophosphate dehydrogenase (488 aa).

CBS domains follow at residues 95–153 and 157–216; these read VISN…SIKI and MTKE…AKDE. NAD(+) is bound by residues Asp250 and 300–302; that span reads GIG. Residues Gly302 and Gly304 each coordinate K(+). Ser305 contributes to the IMP binding site. Position 307 (Cys307) interacts with K(+). The active-site Thioimidate intermediate is the Cys307. IMP contacts are provided by residues 340–342, 363–364, and 387–391; these read DGG, GS, and YRGMG. Arg403 serves as the catalytic Proton acceptor. Glu417 is a binding site for IMP. A disordered region spans residues 467-488; the sequence is AGLAESHPHDVQITKESPNYSF. Positions 471, 472, and 473 each coordinate K(+).

It belongs to the IMPDH/GMPR family. In terms of assembly, homotetramer. The cofactor is K(+).

The catalysed reaction is IMP + NAD(+) + H2O = XMP + NADH + H(+). The protein operates within purine metabolism; XMP biosynthesis via de novo pathway; XMP from IMP: step 1/1. With respect to regulation, mycophenolic acid (MPA) is a non-competitive inhibitor that prevents formation of the closed enzyme conformation by binding to the same site as the amobile flap. In contrast, mizoribine monophosphate (MZP) is a competitive inhibitor that induces the closed conformation. MPA is a potent inhibitor of mammalian IMPDHs but a poor inhibitor of the bacterial enzymes. MZP is a more potent inhibitor of bacterial IMPDH. In terms of biological role, catalyzes the conversion of inosine 5'-phosphate (IMP) to xanthosine 5'-phosphate (XMP), the first committed and rate-limiting step in the de novo synthesis of guanine nucleotides, and therefore plays an important role in the regulation of cell growth. This Staphylococcus saprophyticus subsp. saprophyticus (strain ATCC 15305 / DSM 20229 / NCIMB 8711 / NCTC 7292 / S-41) protein is Inosine-5'-monophosphate dehydrogenase.